Consider the following 100-residue polypeptide: Acylphosphatase (100 aa).

Residues 14-100 enclose the Acylphosphatase-like domain; the sequence is RLSAWVHGHV…RGDLTGFEER (87 aa). Catalysis depends on residues Arg29 and Asn47.

Belongs to the acylphosphatase family.

It carries out the reaction an acyl phosphate + H2O = a carboxylate + phosphate + H(+). The protein is Acylphosphatase (acyP) of Nocardia farcinica (strain IFM 10152).